We begin with the raw amino-acid sequence, 460 residues long: Gastric inhibitory polypeptide receptor (460 aa).

Positions 1-18 (MPLRLLLLLLWLWGLQWA) are cleaved as a signal peptide. The Extracellular portion of the chain corresponds to 19-134 (ETDSEGQTTT…DQTLILERLQ (116 aa)). 3 cysteine pairs are disulfide-bonded: cysteine 42–cysteine 66, cysteine 57–cysteine 99, and cysteine 80–cysteine 114. Residues asparagine 58, asparagine 68, and asparagine 73 are each glycosylated (N-linked (GlcNAc...) asparagine). The helical transmembrane segment at 135–155 (IMYTVGYSLSLTTLLLALLIL) threads the bilayer. Residues 156–166 (SLFRRLHCTRN) lie on the Cytoplasmic side of the membrane. The helical transmembrane segment at 167–185 (YIHMNLFTSFMLRAAAILT) threads the bilayer. Topologically, residues 186 to 222 (RDQLLPPLGPYTGDQAPTPWNQALAACRTAQIMTQYC) are extracellular. A helical transmembrane segment spans residues 223–243 (VGANYTWLLVEGVYLHHLLVI). The Cytoplasmic segment spans residues 244 to 255 (VGRSEKGHFRCY). A helical membrane pass occupies residues 256-276 (LLLGWGAPALFVIPWVIVRYL). Topologically, residues 277-297 (RENTQCWERNEVKAIWWIIRT) are extracellular. A helical transmembrane segment spans residues 298 to 318 (PILITILINFLIFIRILGILV). Topologically, residues 319–337 (SKLRTRQMRCPDYRLRLAR) are cytoplasmic. The chain crosses the membrane as a helical span at residues 338 to 358 (STLTLVPLLGVHEVVFAPVTE). Residues 359–370 (EQVEGSLRFAKL) lie on the Extracellular side of the membrane. Residues 371–391 (AFEIFLSSFQGFLVSVLYCFI) traverse the membrane as a helical segment. The Cytoplasmic segment spans residues 392–460 (NKEVQSEIRQ…PGDEVLESYC (69 aa)).

The protein belongs to the G-protein coupled receptor 2 family. In terms of assembly, may form homodimers and heterodimers with GLP1R. N-glycosylation is required for cell surface expression and lengthens receptor half-life by preventing degradation in the ER.

Its subcellular location is the cell membrane. Functionally, this is a receptor for GIP. The activity of this receptor is mediated by G proteins which activate adenylyl cyclase. In Mus musculus (Mouse), this protein is Gastric inhibitory polypeptide receptor (Gipr).